The sequence spans 126 residues: Glycine cleavage system H protein (126 aa).

One can recognise a Lipoyl-binding domain in the interval 21-103; it reads TATIGISEHA…YEGGWIVKVK (83 aa). The residue at position 62 (Lys-62) is an N6-lipoyllysine.

It belongs to the GcvH family. The glycine cleavage system is composed of four proteins: P, T, L and H. It depends on (R)-lipoate as a cofactor.

The glycine cleavage system catalyzes the degradation of glycine. The H protein shuttles the methylamine group of glycine from the P protein to the T protein. This chain is Glycine cleavage system H protein, found in Vibrio campbellii (strain ATCC BAA-1116).